The following is an 80-amino-acid chain: Pigment-dispersing hormone type 2 (80 aa).

Residues Met-1 to Ala-23 form the signal peptide. Residue Ala-77 is modified to Alanine amide.

It belongs to the arthropod PDH family. As to expression, eyestalk.

The protein resides in the secreted. Its function is as follows. The pigment-dispersing hormone causes the migration of the distal retinal pigment into the proximal end of the pigment chromatophore cells and thus decreases the amount of light entering the retinulas. May also function as a neurotransmitter and/or neuromodulator. The protein is Pigment-dispersing hormone type 2 (PDH2) of Penaeus vannamei (Whiteleg shrimp).